Reading from the N-terminus, the 360-residue chain is Photosystem II protein D1 (360 aa).

The next 3 helical transmembrane spans lie at tyrosine 29–serine 46, histidine 118–leucine 133, and tryptophan 142–alanine 156. Histidine 118 contributes to the chlorophyll a binding site. Tyrosine 126 is a pheophytin a binding site. 2 residues coordinate [CaMn4O5] cluster: aspartate 170 and glutamate 189. A helical transmembrane segment spans residues phenylalanine 197–leucine 218. Histidine 198 contacts chlorophyll a. Residues histidine 215 and serine 264–phenylalanine 265 each bind a quinone. Histidine 215 provides a ligand contact to Fe cation. Residue histidine 272 participates in Fe cation binding. The helical transmembrane segment at phenylalanine 274–methionine 288 threads the bilayer. 4 residues coordinate [CaMn4O5] cluster: histidine 332, glutamate 333, aspartate 342, and alanine 344. A propeptide spanning residues serine 345 to glycine 360 is cleaved from the precursor.

The protein belongs to the reaction center PufL/M/PsbA/D family. PSII is composed of 1 copy each of membrane proteins PsbA, PsbB, PsbC, PsbD, PsbE, PsbF, PsbH, PsbI, PsbJ, PsbK, PsbL, PsbM, PsbT, PsbX, PsbY, PsbZ, Psb30/Ycf12, at least 3 peripheral proteins of the oxygen-evolving complex and a large number of cofactors. It forms dimeric complexes. The cofactor is The D1/D2 heterodimer binds P680, chlorophylls that are the primary electron donor of PSII, and subsequent electron acceptors. It shares a non-heme iron and each subunit binds pheophytin, quinone, additional chlorophylls, carotenoids and lipids. D1 provides most of the ligands for the Mn4-Ca-O5 cluster of the oxygen-evolving complex (OEC). There is also a Cl(-1) ion associated with D1 and D2, which is required for oxygen evolution. The PSII complex binds additional chlorophylls, carotenoids and specific lipids.. Post-translationally, tyr-161 forms a radical intermediate that is referred to as redox-active TyrZ, YZ or Y-Z. C-terminally processed by CTPA; processing is essential to allow assembly of the oxygen-evolving complex and thus photosynthetic growth.

It localises to the plastid. The protein resides in the chloroplast thylakoid membrane. It catalyses the reaction 2 a plastoquinone + 4 hnu + 2 H2O = 2 a plastoquinol + O2. Functionally, photosystem II (PSII) is a light-driven water:plastoquinone oxidoreductase that uses light energy to abstract electrons from H(2)O, generating O(2) and a proton gradient subsequently used for ATP formation. It consists of a core antenna complex that captures photons, and an electron transfer chain that converts photonic excitation into a charge separation. The D1/D2 (PsbA/PsbD) reaction center heterodimer binds P680, the primary electron donor of PSII as well as several subsequent electron acceptors. This is Photosystem II protein D1 from Trieres chinensis (Marine centric diatom).